The sequence spans 366 residues: tRNA/tmRNA (uracil-C(5))-methyltransferase (366 aa).

The S-adenosyl-L-methionine site is built by glutamine 190, tyrosine 218, asparagine 223, glutamate 239, and aspartate 299. The active-site Nucleophile is cysteine 324. Residue glutamate 358 is the Proton acceptor of the active site.

This sequence belongs to the class I-like SAM-binding methyltransferase superfamily. RNA M5U methyltransferase family. TrmA subfamily.

The enzyme catalyses uridine(54) in tRNA + S-adenosyl-L-methionine = 5-methyluridine(54) in tRNA + S-adenosyl-L-homocysteine + H(+). It catalyses the reaction uridine(341) in tmRNA + S-adenosyl-L-methionine = 5-methyluridine(341) in tmRNA + S-adenosyl-L-homocysteine + H(+). Functionally, dual-specificity methyltransferase that catalyzes the formation of 5-methyluridine at position 54 (m5U54) in all tRNAs, and that of position 341 (m5U341) in tmRNA (transfer-mRNA). This is tRNA/tmRNA (uracil-C(5))-methyltransferase from Salmonella typhi.